A 260-amino-acid polypeptide reads, in one-letter code: Acetyl-coenzyme A carboxylase carboxyl transferase subunit alpha (260 aa).

The CoA carboxyltransferase C-terminal domain occupies 1 to 235 (MSAYDKVMAA…SNKILHSINK (235 aa)).

It belongs to the AccA family. Acetyl-CoA carboxylase is a heterohexamer composed of biotin carboxyl carrier protein (AccB), biotin carboxylase (AccC) and two subunits each of ACCase subunit alpha (AccA) and ACCase subunit beta (AccD).

Its subcellular location is the cytoplasm. The catalysed reaction is N(6)-carboxybiotinyl-L-lysyl-[protein] + acetyl-CoA = N(6)-biotinyl-L-lysyl-[protein] + malonyl-CoA. Its pathway is lipid metabolism; malonyl-CoA biosynthesis; malonyl-CoA from acetyl-CoA: step 1/1. Component of the acetyl coenzyme A carboxylase (ACC) complex. First, biotin carboxylase catalyzes the carboxylation of biotin on its carrier protein (BCCP) and then the CO(2) group is transferred by the carboxyltransferase to acetyl-CoA to form malonyl-CoA. This chain is Acetyl-coenzyme A carboxylase carboxyl transferase subunit alpha, found in Ruminiclostridium cellulolyticum (strain ATCC 35319 / DSM 5812 / JCM 6584 / H10) (Clostridium cellulolyticum).